The following is a 153-amino-acid chain: Large ribosomal subunit protein uL22 (153 aa).

It belongs to the universal ribosomal protein uL22 family. As to quaternary structure, part of the 50S ribosomal subunit.

Functionally, this protein binds specifically to 23S rRNA. It makes multiple contacts with different domains of the 23S rRNA in the assembled 50S subunit and ribosome. Its function is as follows. The globular domain of the protein is located near the polypeptide exit tunnel on the outside of the subunit, while an extended beta-hairpin is found that lines the wall of the exit tunnel in the center of the 70S ribosome. This is Large ribosomal subunit protein uL22 from Methanococcus vannielii (strain ATCC 35089 / DSM 1224 / JCM 13029 / OCM 148 / SB).